The chain runs to 100 residues: Urease subunit gamma (100 aa).

It belongs to the urease gamma subunit family. Heterotrimer of UreA (gamma), UreB (beta) and UreC (alpha) subunits. Three heterotrimers associate to form the active enzyme.

The protein resides in the cytoplasm. The enzyme catalyses urea + 2 H2O + H(+) = hydrogencarbonate + 2 NH4(+). The protein operates within nitrogen metabolism; urea degradation; CO(2) and NH(3) from urea (urease route): step 1/1. The protein is Urease subunit gamma of Kocuria rhizophila (strain ATCC 9341 / DSM 348 / NBRC 103217 / DC2201).